The following is a 350-amino-acid chain: Kievitone hydratase (350 aa).

The N-terminal stretch at 1-19 (MMISSVLVAGVVAVSAALA) is a signal peptide.

Homodimer. Post-translationally, glycosylated.

It is found in the secreted. The enzyme catalyses kievitone hydrate = kievitone + H2O. Its function is as follows. Converts fungitoxic kievitone to the less toxic kievitone hydrate, and thereby protects the pathogenic fungus against this phytoalexin. This chain is Kievitone hydratase (khs), found in Fusarium solani subsp. phaseoli (Nectria haematococca).